We begin with the raw amino-acid sequence, 536 residues long: Nuclear hormone receptor family member nhr-7 (536 aa).

Residues 6–82 (NRICAVCGDT…VGMNPDYVRP (77 aa)) constitute a DNA-binding region (nuclear receptor). NR C4-type zinc fingers lie at residues 9–29 (CAVC…CFGC) and 46–70 (CRFE…FRKC). In terms of domain architecture, NR LBD spans 155–378 (ADRSLARKTG…PFHKILTDII (224 aa)). The disordered stretch occupies residues 427 to 465 (SPCQISAPPPPQQQYTDYSQMPSTSSYPANSSPFQSPYR). The span at 439–465 (QQYTDYSQMPSTSSYPANSSPFQSPYR) shows a compositional bias: polar residues.

It belongs to the nuclear hormone receptor family.

The protein localises to the nucleus. Its function is as follows. Orphan nuclear receptor. The sequence is that of Nuclear hormone receptor family member nhr-7 (nhr-7) from Caenorhabditis elegans.